The chain runs to 224 residues: MNQKKAVILLSGGLDSATVVAMAKADGYACYTMSFDYGQRHRAELQAAERVARQLGAIEHKVIGLDLNGMGGSALTDDSIAVPEAPSQGIPVTYVPARNTVFLSLALGWAEVLEARDIFIGVNAVDYSGYPDCRPEFVEAFERMANLATKAGVEGNGFRIQAPLQYLSKAQIIQAGVARGVDYGLTVSCYQADDQGRACGKCDSCRLRADGFAAAGIPDPTPYF.

Residue Leu-10 to Val-20 participates in ATP binding. 4 residues coordinate Zn(2+): Cys-189, Cys-199, Cys-202, and Cys-205.

The protein belongs to the QueC family. Zn(2+) serves as cofactor.

It catalyses the reaction 7-carboxy-7-deazaguanine + NH4(+) + ATP = 7-cyano-7-deazaguanine + ADP + phosphate + H2O + H(+). It functions in the pathway purine metabolism; 7-cyano-7-deazaguanine biosynthesis. In terms of biological role, catalyzes the ATP-dependent conversion of 7-carboxy-7-deazaguanine (CDG) to 7-cyano-7-deazaguanine (preQ(0)). The chain is 7-cyano-7-deazaguanine synthase from Pseudomonas paraeruginosa (strain DSM 24068 / PA7) (Pseudomonas aeruginosa (strain PA7)).